We begin with the raw amino-acid sequence, 52 residues long: Dibenzothiophene metabolism operon protein NahQ/DoxH (52 aa).

The protein operates within aromatic compound metabolism; naphthalene degradation. Functionally, may be involved in the conversion of 2-hydroxy-4-(2'-oxo-3,5-cyclohexadienyl)-buta-2,4-dienoate to cis-O-hydroxybenzylidenepyruvate. DoxH and DoxJ encode different enzymes that may have interchangeable functions. This Pseudomonas putida (Arthrobacter siderocapsulatus) protein is Dibenzothiophene metabolism operon protein NahQ/DoxH (nahQ).